A 445-amino-acid chain; its full sequence is MSNRKYFGTDGIRGRVGNAPITPDFVLKLGWAAGKVLARHGSRKIIIGKDTRISGYMLESALEAGLAAAGLSASFTGPMPTPAVAYLTRTFRAEAGIVISASHNPFYDNGIKFFSIDGTKLPDDVEEAIEAEMEKEITCVDSAELGKASRIVDAAGRYIEFCKGTFPNELSLNGLKVVVDCANGATYHIAPNVLRELGATVIAIGCEPNGVNINEEVGATDVRALQARVLVEKADLGIALDGDGDRVIMVDHEGNKVDGDQIMYIIAREGLRQGQLRGGAVGTLMSNMGLELALKQLGIPFARAKVGDRYVLEKLQEKGWRIGAENSGHVILLDKTTTGDGIVAGLQVLAAMVRNHMSLHDLCSGMKMFPQILVNVRYTAGSGDPLENDAVKAVTADVEATLGNRGRVLLRKSGTEPLIRVMVEGEDEAQVTAFAHRIADAVKAV.

The active-site Phosphoserine intermediate is serine 102. Residues serine 102, aspartate 241, aspartate 243, and aspartate 245 each contribute to the Mg(2+) site. Position 102 is a phosphoserine (serine 102).

Belongs to the phosphohexose mutase family. Mg(2+) is required as a cofactor. Activated by phosphorylation.

The enzyme catalyses alpha-D-glucosamine 1-phosphate = D-glucosamine 6-phosphate. In terms of biological role, catalyzes the conversion of glucosamine-6-phosphate to glucosamine-1-phosphate. This Salmonella paratyphi A (strain ATCC 9150 / SARB42) protein is Phosphoglucosamine mutase.